We begin with the raw amino-acid sequence, 331 residues long: GTPase Obg (331 aa).

The region spanning 1 to 159 (MQFIDQARIA…RELQLELKLL (159 aa)) is the Obg domain. One can recognise an OBG-type G domain in the interval 160 to 328 (AEVGLVGLPN…LLQQVWQELG (169 aa)). GTP contacts are provided by residues 166–173 (GLPNAGKS), 191–195 (FTTLV), 213–216 (DIPG), 280–283 (SKSE), and 309–311 (SAV). Mg(2+)-binding residues include S173 and T193.

Belongs to the TRAFAC class OBG-HflX-like GTPase superfamily. OBG GTPase family. As to quaternary structure, monomer. Requires Mg(2+) as cofactor.

It is found in the cytoplasm. In terms of biological role, an essential GTPase which binds GTP, GDP and possibly (p)ppGpp with moderate affinity, with high nucleotide exchange rates and a fairly low GTP hydrolysis rate. Plays a role in control of the cell cycle, stress response, ribosome biogenesis and in those bacteria that undergo differentiation, in morphogenesis control. This is GTPase Obg from Synechococcus sp. (strain RCC307).